The primary structure comprises 463 residues: Heterogeneous nuclear ribonucleoprotein K (463 aa).

An N-acetylmethionine modification is found at M1. The interval 1 to 37 (METEQPEETFPNTETNGEFGKRPAEDMEEEQAFKRSR) is disordered. The tract at residues 1–276 (METEQPEETF…GRGGRPMPPS (276 aa)) is necessary for interaction with DDX1. The segment covering 19-37 (FGKRPAEDMEEEQAFKRSR) has biased composition (basic and acidic residues). Position 34 is an N6-acetyllysine; alternate (K34). Residue K34 forms a Glycyl lysine isopeptide (Lys-Gly) (interchain with G-Cter in SUMO1); alternate linkage. A Glycyl lysine isopeptide (Lys-Gly) (interchain with G-Cter in SUMO2); alternate cross-link involves residue K34. The interaction with ASFV p30 stretch occupies residues 35 to 197 (RSRNTDEMVE…STDRVVLIGG (163 aa)). S36 carries the post-translational modification Phosphoserine. T39 is modified (phosphothreonine). The KH 1 domain occupies 42–104 (MVELRILLQS…ETIGEILKKI (63 aa)). Residues K52 and K60 each participate in a glycyl lysine isopeptide (Lys-Gly) (interchain with G-Cter in SUMO2) cross-link. 2 tandem repeats follow at residues 54–76 (AGAV…NASV) and 59–62 (GKGG). The interval 54–421 (AGAVIGKGGK…QIRHESGASI (368 aa)) is 2 X 22 AA approximate repeats. The 5 X 4 AA repeats of G-X-G-G stretch occupies residues 59 to 407 (GKGGKNIKAL…LAGSIIGKGG (349 aa)). Phosphoserine occurs at positions 75 and 116. Residues 144–209 (DCELRLLIHQ…DRVVECIKII (66 aa)) form the KH 2 domain. A Glycyl lysine isopeptide (Lys-Gly) (interchain with G-Cter in SUMO1); alternate cross-link involves residue K163. A Glycyl lysine isopeptide (Lys-Gly) (interchain with G-Cter in SUMO2); alternate cross-link involves residue K163. At K198 the chain carries N6-acetyllysine. The segment at 209–337 (ILDLISESPI…RPGDRYDGMV (129 aa)) is interaction with ZIK1. 2 positions are modified to phosphoserine: S214 and S216. Residue K219 forms a Glycyl lysine isopeptide (Lys-Gly) (interchain with G-Cter in SUMO2); alternate linkage. The residue at position 219 (K219) is an N6-succinyllysine; alternate. The tract at residues 236–273 (YGGFTMMFDDRRGRPVGFPMRGRGGFDRMPPGRGGRPM) is RNA-binding RGG-box. Tandem repeats lie at residues 245–250 (DRRGRP), 257–260 (GRGG), and 267–270 (GRGG). Positions 245-329 (DRRGRPVGFP…LMAYDRRGRP (85 aa)) are 2 X 6 AA approximate repeats. The tract at residues 250–329 (PVGFPMRGRG…LMAYDRRGRP (80 aa)) is disordered. Residues 252–266 (GFPMRGRGGFDRMPP) are compositionally biased toward low complexity. Basic and acidic residues predominate over residues 276 to 285 (SRRDYDDMSP). Phosphoserine is present on S284. One copy of the 3-4 repeat lies at 295–298 (GRGG). R316 carries the omega-N-methylarginine modification. A 2-2 repeat occupies 324 to 329 (DRRGRP). R377 is modified (omega-N-methylarginine). A Phosphoserine modification is found at S379. Position 380 is a phosphotyrosine (Y380). In terms of domain architecture, KH 3 spans 387 to 451 (IITTQVTIPK…DQIQNAQYLL (65 aa)). 2 consecutive repeat copies span residues 399–421 (AGSI…GASI) and 404–407 (GKGG). Position 405 is an N6-acetyllysine; alternate (K405). K405 is covalently cross-linked (Glycyl lysine isopeptide (Lys-Gly) (interchain with G-Cter in SUMO2); alternate). S420 is modified (phosphoserine). K422 participates in a covalent cross-link: Glycyl lysine isopeptide (Lys-Gly) (interchain with G-Cter in SUMO1); alternate. A Glycyl lysine isopeptide (Lys-Gly) (interchain with G-Cter in SUMO2); alternate cross-link involves residue K422. A Glycyl lysine isopeptide (Lys-Gly) (interchain with G-Cter in SUMO); alternate cross-link involves residue K422.

In terms of assembly, identified in the spliceosome C complex. Part of a transcription inhibitory ribonucleoprotein complex composed at least of the circular RNA circZNF827, ZNF827 and HNRNPL. Interacts with RBM42 and ZIK1. Interacts with BRDT. Interacts with ANKRD28. Interacts with ASFV p30 protein. Interacts with DDX1. Interacts with MDM2; this interaction leads to ubiquitination and proteasomal degradation. Interacts with p53/TP53. Interacts with IVNS1ABP (via BACK domain); the interaction is direct. Interacts with PPIA/CYPA. As to quaternary structure, (Microbial infection) Interacts with HCV core protein. In terms of processing, arg-296 and Arg-299 are dimethylated, probably to asymmetric dimethylarginine. Post-translationally, sumoylated by CBX4. Sumoylation is increased upon DNA damage, such as that produced by doxorubicin, etoposide, UV light and camptothecin, due to enhanced CBX4 phosphorylation by HIPK2 under these conditions. Ubiquitinated by MDM2. Doxorubicin treatment does not affect monoubiquitination, but slightly decreases HNRNPK poly-ubiquitination. In terms of processing, O-glycosylated (O-GlcNAcylated), in a cell cycle-dependent manner.

The protein resides in the cytoplasm. The protein localises to the nucleus. It localises to the nucleoplasm. It is found in the cell projection. Its subcellular location is the podosome. One of the major pre-mRNA-binding proteins. Binds tenaciously to poly(C) sequences. Likely to play a role in the nuclear metabolism of hnRNAs, particularly for pre-mRNAs that contain cytidine-rich sequences. Can also bind poly(C) single-stranded DNA. Plays an important role in p53/TP53 response to DNA damage, acting at the level of both transcription activation and repression. When sumoylated, acts as a transcriptional coactivator of p53/TP53, playing a role in p21/CDKN1A and 14-3-3 sigma/SFN induction. As far as transcription repression is concerned, acts by interacting with long intergenic RNA p21 (lincRNA-p21), a non-coding RNA induced by p53/TP53. This interaction is necessary for the induction of apoptosis, but not cell cycle arrest. As part of a ribonucleoprotein complex composed at least of ZNF827, HNRNPL and the circular RNA circZNF827 that nucleates the complex on chromatin, may negatively regulate the transcription of genes involved in neuronal differentiation. The sequence is that of Heterogeneous nuclear ribonucleoprotein K (HNRNPK) from Homo sapiens (Human).